The following is a 638-amino-acid chain: Sorting nexin-41 (638 aa).

The segment covering 1-14 (MDSDTSPNPFASSP) has biased composition (low complexity). Positions 1–69 (MDSDTSPNPF…MGATVPGPKP (69 aa)) are disordered. Positions 15–30 (PSSPSPRPSLPPPVPR) are enriched in pro residues. Positions 84–201 (GEQVHIVDAL…HRFLEEDVSW (118 aa)) constitute a PX domain. Positions 118, 120, 144, and 168 each coordinate a 1,2-diacyl-sn-glycero-3-phospho-(1D-myo-inositol-3-phosphate). 3 disordered regions span residues 215 to 239 (KNPLHAPSHNPTFQPTTPTSPSEAP), 408 to 432 (LERGGSVLASPQLEPEAARDERERA), and 545 to 638 (PHPN…LGPL). Positions 225 to 239 (PTFQPTTPTSPSEAP) are enriched in low complexity. Over residues 423-432 (EAARDERERA) the composition is skewed to basic and acidic residues. The span at 552-562 (QTQTQVQSQQS) shows a compositional bias: low complexity. Positions 585-601 (MKNEIERVEIEIADKPL) are enriched in basic and acidic residues.

Belongs to the sorting nexin family.

The protein resides in the endosome membrane. The protein localises to the endomembrane system. Functionally, may be required for cytoplasm to vacuole transport (Cvt) and pexophagy. This Cryptococcus neoformans var. neoformans serotype D (strain B-3501A) (Filobasidiella neoformans) protein is Sorting nexin-41 (SNX41).